Reading from the N-terminus, the 240-residue chain is 2,3,4,5-tetrahydropyridine-2,6-dicarboxylate N-acetyltransferase (240 aa).

This sequence belongs to the transferase hexapeptide repeat family. DapH subfamily.

It carries out the reaction (S)-2,3,4,5-tetrahydrodipicolinate + acetyl-CoA + H2O = L-2-acetamido-6-oxoheptanedioate + CoA. It participates in amino-acid biosynthesis; L-lysine biosynthesis via DAP pathway; LL-2,6-diaminopimelate from (S)-tetrahydrodipicolinate (acetylase route): step 1/3. Functionally, catalyzes the transfer of an acetyl group from acetyl-CoA to tetrahydrodipicolinate. The protein is 2,3,4,5-tetrahydropyridine-2,6-dicarboxylate N-acetyltransferase of Bacillus cereus (strain AH187).